The following is an 85-amino-acid chain: Large ribosomal subunit protein bL27 (85 aa).

The segment at Met1–Leu21 is disordered.

Belongs to the bacterial ribosomal protein bL27 family.

The chain is Large ribosomal subunit protein bL27 from Chromohalobacter salexigens (strain ATCC BAA-138 / DSM 3043 / CIP 106854 / NCIMB 13768 / 1H11).